A 691-amino-acid chain; its full sequence is Inactive TPR repeat-containing thioredoxin TTL3 (691 aa).

2 disordered regions span residues 1-153 (MSHS…AVSP) and 174-209 (MASR…TSGK). At serine 8 the chain carries Phosphoserine. Over residues 19–39 (RFRDLQRNDDDVNKPDFRELD) the composition is skewed to basic and acidic residues. Residues serine 42 and serine 45 each carry the phosphoserine modification. Over residues 51–79 (GSASSSAAATPTSSSGSSGSASGKPSVSS) the composition is skewed to low complexity. Positions 83–93 (KRLDDAYKSHS) are enriched in basic and acidic residues. 3 stretches are compositionally biased toward polar residues: residues 94 to 108 (GELS…TTTR), 118 to 140 (SSTG…HTSP), and 175 to 189 (ASRT…CTGT). 8 TPR repeats span residues 220-253 (PEEL…SPGN), 255-287 (AYRS…DPSY), 289-321 (RAHQ…PDQA), 327-362 (QTLE…GADS), 412-445 (AYVL…DQTN), 458-491 (VVRA…DDSN), 492-525 (SVLY…QPSY), and 527-559 (KALL…LPGD). The Thioredoxin domain maps to 596 to 683 (DKFKKSVALP…MVCPSHQFLE (88 aa)).

As to quaternary structure, interacts with BRL2. Expressed in embryos and organ primordia in shoot and root. In primary and cauline leaves and petals, is expressed in hydathodes, guard cells, petiole cells and cells associated with differentiating vascular bundles.

Its function is as follows. Involved in osmotic and salt stress tolerance. May play a role in the control of meristematic cell size during osmotic stress. May function as an adapter protein for BRL2 and may be required for signaling affecting leaf vascular tissue pattern formation. The chain is Inactive TPR repeat-containing thioredoxin TTL3 from Arabidopsis thaliana (Mouse-ear cress).